The following is a 274-amino-acid chain: Large ribosomal subunit protein uL2 (274 aa).

The disordered stretch occupies residues 1–23 (MAIKIYRPTSPGRRHHSVSSFEE).

This sequence belongs to the universal ribosomal protein uL2 family. As to quaternary structure, part of the 50S ribosomal subunit. Forms a bridge to the 30S subunit in the 70S ribosome.

One of the primary rRNA binding proteins. Required for association of the 30S and 50S subunits to form the 70S ribosome, for tRNA binding and peptide bond formation. It has been suggested to have peptidyltransferase activity; this is somewhat controversial. Makes several contacts with the 16S rRNA in the 70S ribosome. The chain is Large ribosomal subunit protein uL2 from Dehalococcoides mccartyi (strain ATCC BAA-2100 / JCM 16839 / KCTC 5957 / BAV1).